The chain runs to 837 residues: Probable aldehyde oxidase 4 (837 aa).

Positions glutamate 9 to leucine 98 constitute a 2Fe-2S ferredoxin-type domain. [2Fe-2S] cluster is bound by residues cysteine 50, cysteine 55, cysteine 58, and cysteine 80. Residues isoleucine 240 to serine 427 enclose the FAD-binding PCMH-type domain.

The protein belongs to the xanthine dehydrogenase family. In terms of assembly, aldehyde oxidases (AO) are homodimers and heterodimers of AO subunits. The cofactor is [2Fe-2S] cluster. FAD serves as cofactor. It depends on Mo-molybdopterin as a cofactor.

The catalysed reaction is an aldehyde + O2 + H2O = a carboxylate + H2O2 + H(+). This Oryza sativa subsp. japonica (Rice) protein is Probable aldehyde oxidase 4.